Consider the following 121-residue polypeptide: Small ribosomal subunit protein uS13 (121 aa).

The tract at residues 91 to 121 is disordered; it reads HRMSLPVRGQRTRTNARTRRGSRKTVAGRKK. Basic residues predominate over residues 100 to 121; it reads QRTRTNARTRRGSRKTVAGRKK.

It belongs to the universal ribosomal protein uS13 family. As to quaternary structure, part of the 30S ribosomal subunit. Forms a loose heterodimer with protein S19. Forms two bridges to the 50S subunit in the 70S ribosome.

Located at the top of the head of the 30S subunit, it contacts several helices of the 16S rRNA. In the 70S ribosome it contacts the 23S rRNA (bridge B1a) and protein L5 of the 50S subunit (bridge B1b), connecting the 2 subunits; these bridges are implicated in subunit movement. Contacts the tRNAs in the A and P-sites. This chain is Small ribosomal subunit protein uS13, found in Prochlorococcus marinus (strain MIT 9312).